Reading from the N-terminus, the 106-residue chain is Stress-responsive protein 1 (106 aa).

The protein localises to the mitochondrion. In terms of biological role, stress-responsive protein that may play a role in regulation of cell cycle. This Schizosaccharomyces pombe (strain 972 / ATCC 24843) (Fission yeast) protein is Stress-responsive protein 1 (sro1).